The primary structure comprises 283 residues: Non-selective voltage-gated ion channel VDAC3 (283 aa).

C2 bears the N-acetylcysteine mark. Position 4 is a phosphothreonine (T4). N6-acetyllysine is present on residues K12, K15, and K20. 2 beta stranded membrane passes run 26-35 (MVKIDLRTKS) and 39-47 (VEFSTSGHA). Residue K53 forms a Glycyl lysine isopeptide (Lys-Gly) (interchain with G-Cter in ubiquitin) linkage. 3 beta stranded membrane passes run 54–64 (ASGNLETKYKI), 69–76 (LTFTQKWN), and 80–89 (TLGTEISWEN). N6-acetyllysine is present on K90. The chain crosses the membrane as a beta stranded span at residues 95–104 (LKLTLDTIFV). Residues K109 and K110 each participate in a glycyl lysine isopeptide (Lys-Gly) (interchain with G-Cter in ubiquitin) cross-link. 10 beta stranded membrane-spanning segments follow: residues 111–120 (SGKLKASYKR), 123–130 (FSLGSNVD), 137–145 (TIYGWAVLA), 150–158 (LAGYQMSFD), 163–175 (KLSQ…GYKA), 178–185 (FQLHTHVN), 189–198 (EFGGSIYQKV), 202–211 (IETSINLAWT), 218–227 (RFGIAAKYKL), and 231–238 (TSLSAKVN). S241 carries the phosphoserine modification. Residues 242-244 (LIG) and 260-264 (SALID) each bind NAD(+). Transmembrane regions (beta stranded) follow at residues 242 to 251 (LIGLGYTQTL) and 254 to 263 (GVKLTLSALI). At K266 the chain carries N6-acetyllysine; alternate. K266 is covalently cross-linked (Glycyl lysine isopeptide (Lys-Gly) (interchain with G-Cter in ubiquitin); alternate). The beta stranded transmembrane segment at 273–282 (HKVGLGFELE) threads the bilayer.

The protein belongs to the eukaryotic mitochondrial porin family. As to quaternary structure, interacts with ARMC12 in a TBC1D21-dependent manner. Interacts with MISFA. Ubiquitinated by PRKN during mitophagy, leading to its degradation and enhancement of mitophagy. Deubiquitinated by USP30.

The protein localises to the mitochondrion outer membrane. It is found in the membrane. It carries out the reaction chloride(in) = chloride(out). The catalysed reaction is K(+)(in) = K(+)(out). In terms of biological role, non-selective voltage-gated ion channel that mediates the transport of anions and cations through the mitochondrion outer membrane and plasma membrane. Forms a high-conducting channel with a stable open state and a voltage-induced closure with a mild preference for anions over cations. Involved in male fertility and sperm mitochondrial sheath formation. This is Non-selective voltage-gated ion channel VDAC3 from Bos taurus (Bovine).